The primary structure comprises 101 residues: Small ribosomal subunit protein uS14 (101 aa).

Belongs to the universal ribosomal protein uS14 family. In terms of assembly, part of the 30S ribosomal subunit. Contacts proteins S3 and S10.

Its function is as follows. Binds 16S rRNA, required for the assembly of 30S particles and may also be responsible for determining the conformation of the 16S rRNA at the A site. The chain is Small ribosomal subunit protein uS14 from Hahella chejuensis (strain KCTC 2396).